We begin with the raw amino-acid sequence, 129 residues long: MFKAFKEFAFRGNVIDLAVGVILGAAFSGIIKSLVDSIFMPLIGIIIGGIDVKGLSVEVGNANLLYGQFLQASIEFILIAFALFLFVKGINAFRRKEETTEEVAAPTTEEKLLTEIRDALVRQQNERMK.

3 helical membrane-spanning segments follow: residues 8–28 (FAFR…AAFS), 30–50 (IIKS…IGGI), and 67–87 (GQFL…FLFV).

It belongs to the MscL family. In terms of assembly, homopentamer.

The protein resides in the cell membrane. Functionally, channel that opens in response to stretch forces in the membrane lipid bilayer. May participate in the regulation of osmotic pressure changes within the cell. The protein is Large-conductance mechanosensitive channel of Exiguobacterium sibiricum (strain DSM 17290 / CCUG 55495 / CIP 109462 / JCM 13490 / 255-15).